The chain runs to 266 residues: Glutamate racemase (266 aa).

Residues 9-10 (DS) and 41-42 (YG) each bind substrate. C72 acts as the Proton donor/acceptor in catalysis. A substrate-binding site is contributed by 73–74 (NT). The active-site Proton donor/acceptor is C184. Residue 185–186 (TH) coordinates substrate.

It belongs to the aspartate/glutamate racemases family.

It catalyses the reaction L-glutamate = D-glutamate. Its pathway is cell wall biogenesis; peptidoglycan biosynthesis. Provides the (R)-glutamate required for cell wall biosynthesis. The sequence is that of Glutamate racemase from Staphylococcus aureus (strain bovine RF122 / ET3-1).